The sequence spans 341 residues: Protein pelota homolog (341 aa).

It belongs to the eukaryotic release factor 1 family. Pelota subfamily. Monomer. A divalent metal cation is required as a cofactor.

The protein localises to the cytoplasm. In terms of biological role, may function in recognizing stalled ribosomes, interact with stem-loop structures in stalled mRNA molecules, and effect endonucleolytic cleavage of the mRNA. May play a role in the release non-functional ribosomes and degradation of damaged mRNAs. Has endoribonuclease activity. This is Protein pelota homolog from Metallosphaera sedula (strain ATCC 51363 / DSM 5348 / JCM 9185 / NBRC 15509 / TH2).